The primary structure comprises 371 residues: MLVIIRPSGEIALKSPRSRRNFEYTLINNIRNTIGGGKIWRSQGVILLEVNDNNANIEALSEVFGISSFSPVIAIKSNNLEDIVNKAKEIFAEIVKGKIFAVRAKRIGSHSFTSLDVERRAGEALYPYSKGVDLENPEVEIFIEIRNEMTYFYHKVIKGPKGLPVGVAGKTVVLFSGGIDSPVATWMMMKRGSVPIILNFNLGGDLHKELVLKELNMLKRWSGGHKLKIFIVKGTDVFIKLSQVERRSRVVMLKRVMYKTAEKLCEKTNAKSITTGESLSQVSSQTMANLYVTEYGIKYPIFRPLIGFDKEEIVDIARKIGTYKHSIKLPEYCAISTKARTSEDLNEILKNEERLNVDYEKILENSEVIEL.

The THUMP domain maps to 54–156 (NANIEALSEV…NEMTYFYHKV (103 aa)). ATP-binding positions include 174 to 175 (LF), 199 to 200 (NF), Lys-254, Gly-276, and Gln-285.

The protein belongs to the ThiI family.

The protein resides in the cytoplasm. It catalyses the reaction [ThiI sulfur-carrier protein]-S-sulfanyl-L-cysteine + a uridine in tRNA + 2 reduced [2Fe-2S]-[ferredoxin] + ATP + H(+) = [ThiI sulfur-carrier protein]-L-cysteine + a 4-thiouridine in tRNA + 2 oxidized [2Fe-2S]-[ferredoxin] + AMP + diphosphate. The enzyme catalyses [ThiS sulfur-carrier protein]-C-terminal Gly-Gly-AMP + S-sulfanyl-L-cysteinyl-[cysteine desulfurase] + AH2 = [ThiS sulfur-carrier protein]-C-terminal-Gly-aminoethanethioate + L-cysteinyl-[cysteine desulfurase] + A + AMP + 2 H(+). Its pathway is cofactor biosynthesis; thiamine diphosphate biosynthesis. In terms of biological role, catalyzes the ATP-dependent transfer of a sulfur to tRNA to produce 4-thiouridine in position 8 of tRNAs, which functions as a near-UV photosensor. Also catalyzes the transfer of sulfur to the sulfur carrier protein ThiS, forming ThiS-thiocarboxylate. This is a step in the synthesis of thiazole, in the thiamine biosynthesis pathway. The sulfur is donated as persulfide by IscS. In Saccharolobus solfataricus (strain ATCC 35092 / DSM 1617 / JCM 11322 / P2) (Sulfolobus solfataricus), this protein is Probable tRNA sulfurtransferase.